Here is a 201-residue protein sequence, read N- to C-terminus: MTAPIAGPEIERLIHLLARLPGLGPRSARRAALHLIRKRTELLGPLAEALQQAYNHLIPCQICGNIDTRDPCTICADAKRDPTLLVVVETVADLWALERAAALPARYHVLGGTLSPLDGVGPKDLNLQSLTERVAQGEIREVILAVNATVDGQTTAHYITDSLAAFPVKITRLAHGVPVGGELDYLDEGTLAAALRSRTNF.

The segment at 60–75 (CQICGNIDTRDPCTIC) adopts a C4-type zinc-finger fold. Residues 83 to 178 (TLLVVVETVA…KITRLAHGVP (96 aa)) enclose the Toprim domain.

The protein belongs to the RecR family.

In terms of biological role, may play a role in DNA repair. It seems to be involved in an RecBC-independent recombinational process of DNA repair. It may act with RecF and RecO. The polypeptide is Recombination protein RecR (Beijerinckia indica subsp. indica (strain ATCC 9039 / DSM 1715 / NCIMB 8712)).